A 663-amino-acid chain; its full sequence is DNA ligase 1 (663 aa).

Residues 28–32 (DKEYD) and 76–77 (SL) each bind NAD(+). The active-site N6-AMP-lysine intermediate is the lysine 118. The NAD(+) site is built by arginine 139, glutamate 173, and lysine 310. Zn(2+)-binding residues include cysteine 403, cysteine 406, cysteine 419, and cysteine 425. The region spanning 583 to 663 (VSESVFNDKT…KFEELIESVK (81 aa)) is the BRCT domain.

This sequence belongs to the NAD-dependent DNA ligase family. LigA subfamily. Requires Mg(2+) as cofactor. Mn(2+) is required as a cofactor.

It carries out the reaction NAD(+) + (deoxyribonucleotide)n-3'-hydroxyl + 5'-phospho-(deoxyribonucleotide)m = (deoxyribonucleotide)n+m + AMP + beta-nicotinamide D-nucleotide.. In terms of biological role, DNA ligase that catalyzes the formation of phosphodiester linkages between 5'-phosphoryl and 3'-hydroxyl groups in double-stranded DNA using NAD as a coenzyme and as the energy source for the reaction. It is essential for DNA replication and repair of damaged DNA. The sequence is that of DNA ligase 1 from Clostridium acetobutylicum (strain ATCC 824 / DSM 792 / JCM 1419 / IAM 19013 / LMG 5710 / NBRC 13948 / NRRL B-527 / VKM B-1787 / 2291 / W).